Here is a 340-residue protein sequence, read N- to C-terminus: GTPase Obg (340 aa).

Positions 1–158 (MSFIDEAKVY…KWIILKLKII (158 aa)) constitute an Obg domain. Positions 159 to 325 (SDVGIIGLPN…LSILIKHINK (167 aa)) constitute an OBG-type G domain. Residues 165–172 (GLPNAGKS), 190–194 (FTTLE), 211–214 (DIPG), 278–281 (NKCD), and 306–308 (SSI) each bind GTP. Mg(2+) contacts are provided by S172 and T192.

This sequence belongs to the TRAFAC class OBG-HflX-like GTPase superfamily. OBG GTPase family. In terms of assembly, monomer. Requires Mg(2+) as cofactor.

Its subcellular location is the cytoplasm. Its function is as follows. An essential GTPase which binds GTP, GDP and possibly (p)ppGpp with moderate affinity, with high nucleotide exchange rates and a fairly low GTP hydrolysis rate. Plays a role in control of the cell cycle, stress response, ribosome biogenesis and in those bacteria that undergo differentiation, in morphogenesis control. The sequence is that of GTPase Obg from Ehrlichia ruminantium (strain Gardel).